Consider the following 101-residue polypeptide: uncharacterized protein (101 aa).

The first 25 residues, 1–25 (MISIPFRSTMSRTLVFIILPTVLSC), serve as a signal peptide directing secretion.

This is an uncharacterized protein from Saccharomyces cerevisiae (strain ATCC 204508 / S288c) (Baker's yeast).